A 406-amino-acid polypeptide reads, in one-letter code: Tyrosine--tRNA ligase (406 aa).

Y35 is a binding site for L-tyrosine. The 'HIGH' region signature appears at 40–49; the sequence is PTADSLHVGH. L-tyrosine is bound by residues Y168 and Q172. Positions 228 to 232 match the 'KMSKS' region motif; it reads KMGKT. Residue K231 participates in ATP binding. One can recognise an S4 RNA-binding domain in the interval 340–404; that stretch reads SELLDILVEA…RGKKNYNKIV (65 aa).

It belongs to the class-I aminoacyl-tRNA synthetase family. TyrS type 1 subfamily. Homodimer.

It localises to the cytoplasm. It catalyses the reaction tRNA(Tyr) + L-tyrosine + ATP = L-tyrosyl-tRNA(Tyr) + AMP + diphosphate + H(+). Catalyzes the attachment of tyrosine to tRNA(Tyr) in a two-step reaction: tyrosine is first activated by ATP to form Tyr-AMP and then transferred to the acceptor end of tRNA(Tyr). This Clostridium perfringens (strain ATCC 13124 / DSM 756 / JCM 1290 / NCIMB 6125 / NCTC 8237 / Type A) protein is Tyrosine--tRNA ligase.